The following is a 149-amino-acid chain: ER export of PMA1 protein 1 (149 aa).

Topologically, residues 1-6 (MNLYGY) are lumenal. A helical; Signal-anchor for type II membrane protein transmembrane segment spans residues 7-27 (FLLLIIVIAFIALLPLFSGIG). Over 28 to 149 (TFKLTKPKSS…KKNEAYEGFV (122 aa)) the chain is Cytoplasmic.

Interacts with PMA1 and PSG1.

Its subcellular location is the endoplasmic reticulum membrane. The protein localises to the cytoplasmic vesicle. It is found in the COPI-coated vesicle membrane. It localises to the COPII-coated vesicle membrane. The protein resides in the golgi apparatus membrane. Functionally, specific cargo receptor protein for the plasma membrane ATPase PMA1 that acts with PSG1 to promote the transport and maturation of PMA1. EXP1 and PSG1 probably act sequentially to promote PMA1 sorting between the ER and the Golgi, with EXP1 promoting PMA1 export from the ER to the Golgi while PSG1 has a role in PMA1 maturation or quality control in the Golgi. This Saccharomyces cerevisiae (strain ATCC 204508 / S288c) (Baker's yeast) protein is ER export of PMA1 protein 1.